Consider the following 491-residue polypeptide: Cytochrome P450 2K3 (491 aa).

C434 provides a ligand contact to heme.

This sequence belongs to the cytochrome P450 family. It depends on heme as a cofactor.

Its subcellular location is the endoplasmic reticulum membrane. The protein localises to the microsome membrane. It carries out the reaction an organic molecule + reduced [NADPH--hemoprotein reductase] + O2 = an alcohol + oxidized [NADPH--hemoprotein reductase] + H2O + H(+). This chain is Cytochrome P450 2K3 (cyp2k3), found in Oncorhynchus mykiss (Rainbow trout).